Reading from the N-terminus, the 430-residue chain is Probable FAD-dependent monooxygenase (430 aa).

Residues 1–23 form the signal peptide; it reads MGSTSTPPHVLIIGAGITGLALA. 9–37 lines the FAD pocket; it reads HVLIIGAGITGLALAQALRKHGVSFAVYE. 2 N-linked (GlcNAc...) asparagine glycosylation sites follow: Asn130 and Asn151. Residue 307–330 coordinates FAD; that stretch reads LEDWPTPPKGSWSNLGGTATLVGD.

The cofactor is FAD.

The sequence is that of Probable FAD-dependent monooxygenase from Arthroderma benhamiae (strain ATCC MYA-4681 / CBS 112371) (Trichophyton mentagrophytes).